The sequence spans 34 residues: Delta-theraphotoxin-Hm1b (34 aa).

3 cysteine pairs are disulfide-bonded: cysteine 2–cysteine 16, cysteine 9–cysteine 21, and cysteine 15–cysteine 28. The residue at position 34 (phenylalanine 34) is a Phenylalanine amide.

This sequence belongs to the neurotoxin 10 (Hwtx-1) family. 09 (HaTx) subfamily. As to expression, expressed by the venom gland.

The protein resides in the secreted. Its function is as follows. Gating-modifier toxin that potently and selectively acts on Nav1.1/SCN1A and Nav1.3/SCN3A. It enhances hNav1.1/SCN1A currents and delays fast inactivation of the channel (EC(50)=11.6 nM), leading to a sustained current. Similar effects are observed at Nav1.3/SCN3A (EC(50)=11.8 nM), but with less sustained currents. When tested on Nav1.2/SCN2A, the native toxin decreases the peak current by 50% at saturating concentration, whereas the recombinant toxin only shows a weak decrease of peak current. The native toxin specifically activates the voltage-gated sodium channel Nav1.1/SCN1A in somatosensory neurons to elicit acute pain and mechanical allodynia. When tested on Nav1.1/SCN1A, the toxin induces a hyperpolarising shift of the voltage-dependence of steady-state activation, and induces a depolarizing shift in the voltage dependence of inactivation. In addition, it does not modify the recovery from fast inactivation in Nav1.1/SCN1A. The toxin hydrophobic face probably interacts with the domain IV voltage-sensor of Nav1.1/SCN1A and Nav1.3/SCN3A and may trap the voltage-sensing S4 helix in a partially activated state. In vivo, intracerebroventricular injection into mice elicits convulsions, spasms, tremors and rapid death. When injected into mouse hindpaw, the toxin elicits an immediate and robust response to pain. However, intraplantar injection of toxin does not cause neurogenic inflammation or alter sensitivity to heat, indicative of a modality-specific effect on mechanosensitive neurons. The protein is Delta-theraphotoxin-Hm1b of Heteroscodra maculata (Togo starburst tarantula).